A 485-amino-acid polypeptide reads, in one-letter code: NADH-quinone oxidoreductase subunit N (485 aa).

14 helical membrane-spanning segments follow: residues 8 to 28, 35 to 55, 75 to 95, 105 to 125, 127 to 147, 159 to 179, 203 to 223, 235 to 255, 271 to 291, 303 to 323, 326 to 346, 371 to 393, 406 to 426, and 449 to 469; these read LIALLPLLIVGLTVVVVMLCI, FINSTLTVIGINLALLSLWFV, FYTGLVLVASLATSTLAYAWL, FYLLVLIATMGGILLASANHL, ALFLGIELISLPLFGMVGYAF, YTLLSAAAASFLLFGMALVYA, LLAGLGMMVVGLGFKLSLVPF, PVPVSTFLATASKIAIFAVVM, LVLAIIAFASMLFGNLMALSQ, IAHLGYLLVGLIVVQAHTLAL, VGVYLAGYLFASLGAFGVVSL, LLSSVLTVMMLSLAGIPMTLGFI, HLGWLTGAVVAGSAIGLFYYL, and ALTAGGVVVLISSLLVLLLGL.

Belongs to the complex I subunit 2 family. As to quaternary structure, NDH-1 is composed of 13 different subunits. Subunits NuoA, H, J, K, L, M, N constitute the membrane sector of the complex.

Its subcellular location is the cell inner membrane. It catalyses the reaction a quinone + NADH + 5 H(+)(in) = a quinol + NAD(+) + 4 H(+)(out). Its function is as follows. NDH-1 shuttles electrons from NADH, via FMN and iron-sulfur (Fe-S) centers, to quinones in the respiratory chain. The immediate electron acceptor for the enzyme in this species is believed to be ubiquinone. Couples the redox reaction to proton translocation (for every two electrons transferred, four hydrogen ions are translocated across the cytoplasmic membrane), and thus conserves the redox energy in a proton gradient. The polypeptide is NADH-quinone oxidoreductase subunit N (Sodalis glossinidius (strain morsitans)).